The sequence spans 209 residues: Pyroglutamyl-peptidase 1 (209 aa).

Residues E85, C149, and H168 contribute to the active site.

It belongs to the peptidase C15 family. In terms of assembly, monomer.

The protein resides in the cytoplasm. The enzyme catalyses Release of an N-terminal pyroglutamyl group from a polypeptide, the second amino acid generally not being Pro.. Its function is as follows. Removes 5-oxoproline from various penultimate amino acid residues except L-proline. The sequence is that of Pyroglutamyl-peptidase 1 (Pgpep1) from Mus musculus (Mouse).